The sequence spans 279 residues: Methyltransferase prhM (279 aa).

Residues 124 to 125 (DI) and 152 to 153 (DV) contribute to the S-adenosyl-L-methionine site.

The protein belongs to the class I-like SAM-binding methyltransferase superfamily.

Its pathway is secondary metabolite biosynthesis; terpenoid biosynthesis. Functionally, methyltransferase; part of the gene cluster that mediates the biosynthesis of paraherquonin, a meroterpenoid with a unique, highly congested hexacyclic molecular architecture. The first step of the pathway is the synthesis of 3,5-dimethylorsellinic acid (DMOA) by the polyketide synthase prhL. Synthesis of DMOA is followed by farnesylation by the prenyltransferase prhE, methylesterification by the methyl-transferase prhM, epoxidation of the prenyl chain by the flavin-dependent monooxygenase prhF, and cyclization of the farnesyl moiety by the terpene cyclase prhH, to yield the tetracyclic intermediate, protoaustinoid A. The short chain dehydrogenase prhI then oxidizes the C-3 alcohol group of the terpene cyclase product to transform protoaustinoid A into protoaustinoid B. The FAD-binding monooxygenase prhJ catalyzes the oxidation of protoaustinoid B into preaustinoid A which is further oxidized into preaustinoid A1 by FAD-binding monooxygenase phrK. Finally, prhA leads to berkeleydione via the berkeleyone B intermediate. PrhA is a multifunctional dioxygenase that first desaturates at C5-C6 to form berkeleyone B, followed by rearrangement of the A/B-ring to form the cycloheptadiene moiety in berkeleydione. Berkeleydione serves as the key intermediate for the biosynthesis of paraherquonin as well as many other meroterpenoids. The cytochrome P450 monooxygenases prhB, prhD, and prhN, as well as the isomerase prhC, are probably involved in the late stage of paraherquonin biosynthesis, after the production of berkeleydione. Especially prhC might be a multifunctional enzyme that catalyzes the D-ring expansion via intramolecular methoxy rearrangement, as well as the hydrolysis of the expanded D-ring. In Penicillium brasilianum, this protein is Methyltransferase prhM.